We begin with the raw amino-acid sequence, 162 residues long: UPF0262 protein HNE_1347 (162 aa).

It belongs to the UPF0262 family.

The sequence is that of UPF0262 protein HNE_1347 from Hyphomonas neptunium (strain ATCC 15444).